The sequence spans 216 residues: DegV domain-containing protein UU190 (216 aa).

In terms of domain architecture, DegV spans 1–215; sequence MLWKNLDELF…LNNFAILIEA (215 aa). Hexadecanoate is bound at residue Ser-26.

In terms of biological role, may bind long-chain fatty acids, such as palmitate, and may play a role in lipid transport or fatty acid metabolism. This chain is DegV domain-containing protein UU190, found in Ureaplasma parvum serovar 3 (strain ATCC 700970).